A 357-amino-acid polypeptide reads, in one-letter code: Uroporphyrinogen decarboxylase (357 aa).

Residues 30–34, D79, Y154, S209, and H336 contribute to the substrate site; that span reads RQAGR.

It belongs to the uroporphyrinogen decarboxylase family. Homodimer.

Its subcellular location is the cytoplasm. The enzyme catalyses uroporphyrinogen III + 4 H(+) = coproporphyrinogen III + 4 CO2. It participates in porphyrin-containing compound metabolism; protoporphyrin-IX biosynthesis; coproporphyrinogen-III from 5-aminolevulinate: step 4/4. Catalyzes the decarboxylation of four acetate groups of uroporphyrinogen-III to yield coproporphyrinogen-III. The sequence is that of Uroporphyrinogen decarboxylase from Mycobacterium leprae (strain Br4923).